We begin with the raw amino-acid sequence, 379 residues long: Anhydro-N-acetylmuramic acid kinase (379 aa).

Position 9 to 16 (9 to 16 (GTSVDGID)) interacts with ATP.

It belongs to the anhydro-N-acetylmuramic acid kinase family.

The catalysed reaction is 1,6-anhydro-N-acetyl-beta-muramate + ATP + H2O = N-acetyl-D-muramate 6-phosphate + ADP + H(+). The protein operates within amino-sugar metabolism; 1,6-anhydro-N-acetylmuramate degradation. It participates in cell wall biogenesis; peptidoglycan recycling. Catalyzes the specific phosphorylation of 1,6-anhydro-N-acetylmuramic acid (anhMurNAc) with the simultaneous cleavage of the 1,6-anhydro ring, generating MurNAc-6-P. Is required for the utilization of anhMurNAc either imported from the medium or derived from its own cell wall murein, and thus plays a role in cell wall recycling. The chain is Anhydro-N-acetylmuramic acid kinase from Acaryochloris marina (strain MBIC 11017).